A 362-amino-acid polypeptide reads, in one-letter code: UDP-N-acetylglucosamine--N-acetylmuramyl-(pentapeptide) pyrophosphoryl-undecaprenol N-acetylglucosamine transferase (362 aa).

UDP-N-acetyl-alpha-D-glucosamine is bound by residues 15 to 17 (TGG), Asn-127, Arg-165, Ser-191, Ile-247, 266 to 271 (ALTVSE), and Gln-292.

It belongs to the glycosyltransferase 28 family. MurG subfamily.

The protein resides in the cell inner membrane. The enzyme catalyses di-trans,octa-cis-undecaprenyl diphospho-N-acetyl-alpha-D-muramoyl-L-alanyl-D-glutamyl-meso-2,6-diaminopimeloyl-D-alanyl-D-alanine + UDP-N-acetyl-alpha-D-glucosamine = di-trans,octa-cis-undecaprenyl diphospho-[N-acetyl-alpha-D-glucosaminyl-(1-&gt;4)]-N-acetyl-alpha-D-muramoyl-L-alanyl-D-glutamyl-meso-2,6-diaminopimeloyl-D-alanyl-D-alanine + UDP + H(+). The protein operates within cell wall biogenesis; peptidoglycan biosynthesis. Cell wall formation. Catalyzes the transfer of a GlcNAc subunit on undecaprenyl-pyrophosphoryl-MurNAc-pentapeptide (lipid intermediate I) to form undecaprenyl-pyrophosphoryl-MurNAc-(pentapeptide)GlcNAc (lipid intermediate II). The protein is UDP-N-acetylglucosamine--N-acetylmuramyl-(pentapeptide) pyrophosphoryl-undecaprenol N-acetylglucosamine transferase of Shewanella baltica (strain OS155 / ATCC BAA-1091).